Here is a 56-residue protein sequence, read N- to C-terminus: Ferredoxin (56 aa).

4Fe-4S ferredoxin-type domains lie at 2-28 (AYKI…SQGD) and 29-56 (TQFV…PVQE). Residues Cys-9, Cys-12, Cys-15, Cys-19, Cys-38, Cys-41, Cys-44, and Cys-48 each contribute to the [4Fe-4S] cluster site.

It depends on [4Fe-4S] cluster as a cofactor.

Its function is as follows. Ferredoxins are iron-sulfur proteins that transfer electrons in a wide variety of metabolic reactions. The protein is Ferredoxin (fer) of Clostridium perfringens (strain 13 / Type A).